Reading from the N-terminus, the 424-residue chain is Adenylosuccinate synthetase 1 (424 aa).

Residues 12 to 18 (GDEGKGK) and 40 to 42 (GHT) contribute to the GTP site. Asp-13 serves as the catalytic Proton acceptor. Mg(2+) contacts are provided by Asp-13 and Gly-40. IMP is bound by residues 13 to 16 (DEGK), 38 to 41 (NAGH), Thr-127, Arg-141, Thr-236, and Arg-304. His-41 acts as the Proton donor in catalysis. Residue 300-306 (ARTGRPR) participates in substrate binding. Residues Arg-306, 332-334 (KLD), and 413-415 (GVG) contribute to the GTP site.

It belongs to the adenylosuccinate synthetase family. In terms of assembly, homodimer. Requires Mg(2+) as cofactor.

Its subcellular location is the cytoplasm. The catalysed reaction is IMP + L-aspartate + GTP = N(6)-(1,2-dicarboxyethyl)-AMP + GDP + phosphate + 2 H(+). It functions in the pathway purine metabolism; AMP biosynthesis via de novo pathway; AMP from IMP: step 1/2. Functionally, plays an important role in the de novo pathway of purine nucleotide biosynthesis. Catalyzes the first committed step in the biosynthesis of AMP from IMP. This Methanosarcina acetivorans (strain ATCC 35395 / DSM 2834 / JCM 12185 / C2A) protein is Adenylosuccinate synthetase 1.